Reading from the N-terminus, the 315-residue chain is Putative ankyrin repeat protein R600 (315 aa).

ANK repeat units lie at residues 79–108 (NECRYFRMAVYNNSYDIAKYLLENGANVHV), 118–152 (SGFGKFYVFHSEKKEKRDTVELVKLLIDYNAMVGT), 153–182 (DTCNLVHTAIDANRLDVVKILVENGADIFS), 184–211 (QSKLLKSAVMYNYDILEYLISQGIDVTD), and 212–240 (DNNSVLKFAVSRGYDCVDLLLDAGADMNT).

This Acanthamoeba polyphaga mimivirus (APMV) protein is Putative ankyrin repeat protein R600.